The primary structure comprises 221 residues: GTPase Obg (221 aa).

The 61-residue stretch at 1 to 61 folds into the OBG-type G domain; that stretch reads PSALRLVLLN…LKYKLLEIVQ (61 aa). GTP is bound by residues 10 to 13 and 42 to 44; these read NKAD and SAV. The region spanning 82 to 162 is the OCT domain; it reads VVHRTKGQFQ…IGGISFEWEP (81 aa).

Belongs to the TRAFAC class OBG-HflX-like GTPase superfamily. OBG GTPase family. Monomer. Mg(2+) is required as a cofactor.

The protein resides in the cytoplasm. In terms of biological role, an essential GTPase which binds GTP, GDP and possibly (p)ppGpp with moderate affinity, with high nucleotide exchange rates and a fairly low GTP hydrolysis rate. Plays a role in control of the cell cycle, stress response, ribosome biogenesis and in those bacteria that undergo differentiation, in morphogenesis control. The protein is GTPase Obg of Corynebacterium melassecola.